We begin with the raw amino-acid sequence, 58 residues long: Microcin J25 (58 aa).

Positions 1–37 (MIKHFHFNKLSSGKKNNVPSPAKGVIQIKKSASQLTK) are excised as a propeptide. The segment at residues 38–45 (GGAGHVPE) is a cross-link (isoglutamyl glycine isopeptide (Gly-Glu)).

The protein resides in the secreted. Peptide antibiotic that functions through inhibition of the bacterial DNA-dependent RNA polymerase (RNAP). Inhibits transcription by binding deep within RNAP secondary channel, where it sterically blocks the folding of the trigger loop, which is essential for efficient catalysis. In addition, it also seems to restrict access of nucleotide substrates to the catalytic center, and shows a partially competitive mode of inhibition with them. Exhibits potent bacteriocidal activity against a range of Enterobacteriaceae, including several pathogenic E.coli, Salmonella and Shigella strains. Also acts on the cytoplasmic membrane of Salmonella newport, producing alteration of membrane permeability and disruption of the subsequent gradient dissipation, which inhibits several processes essential for cell viability, such as oxygen consumption. Induces bacterial filamentation in susceptible cells in a non-SOS-dependent way, but this phenotype may result from impaired transcription of genes coding for cell division proteins. This is Microcin J25 (mcjA) from Escherichia coli.